We begin with the raw amino-acid sequence, 124 residues long: ATP synthase epsilon chain (124 aa).

Positions 99–118 are enriched in basic and acidic residues; sequence LEQAKTEGDAHAERRADVRL. The disordered stretch occupies residues 99–124; it reads LEQAKTEGDAHAERRADVRLRAAAGR.

It belongs to the ATPase epsilon chain family. In terms of assembly, F-type ATPases have 2 components, CF(1) - the catalytic core - and CF(0) - the membrane proton channel. CF(1) has five subunits: alpha(3), beta(3), gamma(1), delta(1), epsilon(1). CF(0) has three main subunits: a, b and c.

Its subcellular location is the cell membrane. Produces ATP from ADP in the presence of a proton gradient across the membrane. The chain is ATP synthase epsilon chain (atpC) from Streptomyces coelicolor (strain ATCC BAA-471 / A3(2) / M145).